Here is a 384-residue protein sequence, read N- to C-terminus: D-galactosamine-6-phosphate deaminase AgaS (384 aa).

SIS domains are found at residues 45–197 and 215–364; these read LEPL…SQTF and SEGV…PDTP.

This sequence belongs to the SIS family. AgaS subfamily.

It catalyses the reaction D-galactosamine 6-phosphate + H2O = D-tagatopyranose 1-phosphate + NH4(+). In terms of biological role, catalyzes the isomerization-deamination of galactosamine 6-phosphate to form tagatofuranose 6-phosphate and ammonium ion. The chain is D-galactosamine-6-phosphate deaminase AgaS from Escherichia coli O157:H7.